The primary structure comprises 544 residues: Methionine--tRNA ligase (544 aa).

The short motif at 10–20 (PYANGSLHLGH) is the 'HIGH' region element. Zn(2+) contacts are provided by Cys-141, Cys-144, Cys-153, and Cys-156. The 'KMSKS' region motif lies at 329-333 (KLSTS). Thr-332 serves as a coordination point for ATP.

This sequence belongs to the class-I aminoacyl-tRNA synthetase family. MetG type 1 subfamily. In terms of assembly, monomer. Zn(2+) serves as cofactor.

Its subcellular location is the cytoplasm. It carries out the reaction tRNA(Met) + L-methionine + ATP = L-methionyl-tRNA(Met) + AMP + diphosphate. In terms of biological role, is required not only for elongation of protein synthesis but also for the initiation of all mRNA translation through initiator tRNA(fMet) aminoacylation. The protein is Methionine--tRNA ligase of Bacillus cereus (strain 03BB102).